A 119-amino-acid chain; its full sequence is MARVKGGVVSRKRRKRILKLAKGYYGAKHLLFRTAKEQVMNSYYYAYRDRRQKKRDFRKLWITRINAAARMNGLSYSQLMHGLKLAEIEVNRKMLADLAVNDAAAFTALADAAKAKLAK.

Belongs to the bacterial ribosomal protein bL20 family.

Its function is as follows. Binds directly to 23S ribosomal RNA and is necessary for the in vitro assembly process of the 50S ribosomal subunit. It is not involved in the protein synthesizing functions of that subunit. The protein is Large ribosomal subunit protein bL20 of Streptococcus suis (strain 98HAH33).